A 246-amino-acid chain; its full sequence is tRNA (guanine-N(7)-)-methyltransferase (246 aa).

Positions 76, 101, 128, and 151 each coordinate S-adenosyl-L-methionine. Residue Asp151 is part of the active site. Lys155 lines the substrate pocket. The tract at residues 157–162 (RHNKRR) is interaction with RNA. Residues Asp187 and 222-225 (TKFE) contribute to the substrate site.

It belongs to the class I-like SAM-binding methyltransferase superfamily. TrmB family.

The catalysed reaction is guanosine(46) in tRNA + S-adenosyl-L-methionine = N(7)-methylguanosine(46) in tRNA + S-adenosyl-L-homocysteine. Its pathway is tRNA modification; N(7)-methylguanine-tRNA biosynthesis. Its function is as follows. Catalyzes the formation of N(7)-methylguanine at position 46 (m7G46) in tRNA. The chain is tRNA (guanine-N(7)-)-methyltransferase from Dechloromonas aromatica (strain RCB).